We begin with the raw amino-acid sequence, 603 residues long: Linalool synthase Tps-5031L19, chloroplastic (603 aa).

A chloroplast-targeting transit peptide spans 1-36; sequence MSSMRTYVAIMKKPSVEHVDNVDKKASKPSWRVSLS. 5 residues coordinate (2E)-geranyl diphosphate: arginine 322, aspartate 359, aspartate 363, arginine 500, and aspartate 503. Aspartate 359 and aspartate 363 together coordinate Mg(2+). The DDXXD motif motif lies at 359–363; sequence DDVYD. Aspartate 503, threonine 507, and glutamate 511 together coordinate Mg(2+).

The protein belongs to the terpene synthase family. Tpsb subfamily. In terms of assembly, monomer. Requires Mg(2+) as cofactor. The cofactor is Mn(2+).

The protein localises to the plastid. It is found in the chloroplast. It catalyses the reaction (2E)-geranyl diphosphate + H2O = linalool + diphosphate. It participates in secondary metabolite biosynthesis; terpenoid biosynthesis. Functionally, monoterpene synthase (mono-TPS) involved in the biosynthesis of monoterpenes natural products. Catalyzes the conversion of (2E)-geranyl diphosphate (GPP) into linalool. The sequence is that of Linalool synthase Tps-5031L19, chloroplastic from Perilla frutescens var. hirtella (Perilla citriodora).